A 226-amino-acid chain; its full sequence is Putative integrase V10 (226 aa).

Residues Arg97, His174, and Arg177 contribute to the active site. The active-site O-(3'-phospho-DNA)-tyrosine intermediate is Tyr210.

The protein belongs to the 'phage' integrase family.

May catalyze site-specific integration of viral genome into host or helper virus DNA. This Acanthamoeba polyphaga (Amoeba) protein is Putative integrase V10.